Here is a 525-residue protein sequence, read N- to C-terminus: Lysine--tRNA ligase (525 aa).

The 'HIGH' region signature appears at 44–52 (PSGLPHIGT). The 'KMSKS' region signature appears at 290 to 294 (KISKS). K293 is an ATP binding site.

This sequence belongs to the class-I aminoacyl-tRNA synthetase family.

It localises to the cytoplasm. The enzyme catalyses tRNA(Lys) + L-lysine + ATP = L-lysyl-tRNA(Lys) + AMP + diphosphate. The sequence is that of Lysine--tRNA ligase from Rickettsia felis (strain ATCC VR-1525 / URRWXCal2) (Rickettsia azadi).